The primary structure comprises 195 residues: MYLINQNGWIEVICGSMFSGKSEELIRRVRRTQFAKQHAIVFKPCIDNRYSEEDVVSHNGLKVKAVPVSASKDIFKHITEEMDVIAIDEVQFFDGDIVEVVQVLANRGYRVIVAGLDQDFRGLPFGQVPQLMAIAEHVTKLQAVCSACGSPASRTQRLIDGEPAAFDDPIILVGASESYEPRCRHCHAVPTNKDK.

Residues 15-22 (GSMFSGKS) and 88-91 (DEVQ) contribute to the ATP site. The active-site Proton acceptor is the glutamate 89. Zn(2+)-binding residues include cysteine 145, cysteine 148, cysteine 183, and cysteine 186.

Belongs to the thymidine kinase family. As to quaternary structure, homotetramer.

It is found in the cytoplasm. The enzyme catalyses thymidine + ATP = dTMP + ADP + H(+). The chain is Thymidine kinase from Bacillus cereus (strain ZK / E33L).